A 1382-amino-acid polypeptide reads, in one-letter code: Hepatocyte growth factor receptor (1382 aa).

Residues Met-1–Gly-24 form the signal peptide. Residues Glu-25 to Thr-933 lie on the Extracellular side of the membrane. The region spanning Lys-27 to Leu-516 is the Sema domain. N-linked (GlcNAc...) asparagine glycosylation is present at Asn-45. 4 cysteine pairs are disulfide-bonded: Cys-95-Cys-101, Cys-98-Cys-160, Cys-133-Cys-141, and Cys-173-Cys-176. Asn-106 is a glycosylation site (N-linked (GlcNAc...) asparagine). The N-linked (GlcNAc...) asparagine glycan is linked to Asn-149. N-linked (GlcNAc...) asparagine glycosylation is found at Asn-203 and Asn-359. 2 disulfides stabilise this stretch: Cys-299–Cys-364 and Cys-386–Cys-398. N-linked (GlcNAc...) asparagine glycans are attached at residues Asn-400 and Asn-406. Disulfide bonds link Cys-521–Cys-539, Cys-527–Cys-562, Cys-530–Cys-546, and Cys-542–Cys-552. 3 consecutive IPT/TIG domains span residues Pro-564 to Val-656, Pro-658 to Arg-740, and Pro-743 to Val-837. O-linked (Man) threonine glycosylation is present at Thr-583. N-linked (GlcNAc...) asparagine glycosylation is found at Asn-608 and Asn-636. O-linked (Man) threonine glycosylation is found at Thr-677 and Thr-762. Residues Asn-786, Asn-880, and Asn-931 are each glycosylated (N-linked (GlcNAc...) asparagine). Residues Gly-934–Leu-956 form a helical membrane-spanning segment. Residues Lys-957–Thr-1382 are Cytoplasmic-facing. Ser-967 carries the phosphoserine modification. Thr-978 carries the phosphothreonine modification. A phosphoserine mark is found at Ser-991, Ser-998, and Ser-1001. At Tyr-1004 the chain carries Phosphotyrosine. In terms of domain architecture, Protein kinase spans Val-1079–Ile-1346. Residues Ile-1085–Val-1093 and Lys-1111 each bind ATP. Residue Asp-1205 is the Proton acceptor of the active site. The interval Leu-1213 to Thr-1382 is interaction with RANBP9. A Phosphotyrosine modification is found at Tyr-1231. Residues Tyr-1235 and Tyr-1236 each carry the phosphotyrosine; by autocatalysis modification. Thr-1290 bears the Phosphothreonine mark. Residues Trp-1321–Val-1360 form an interaction with MUC20 region. Residues Tyr-1350 and Tyr-1357 each carry the phosphotyrosine; by autocatalysis modification. Residue Tyr-1366 is modified to Phosphotyrosine.

Belongs to the protein kinase superfamily. Tyr protein kinase family. As to quaternary structure, heterodimer made of an alpha chain (50 kDa) and a beta chain (145 kDa) which are disulfide linked. Binds PLXNB1. Interacts when phosphorylated with downstream effectors including STAT3, PIK3R1, SRC, PCLG1, GRB2 and GAB1. Interacts with SPSB1, SPSB2 and SPSB4. Interacts with INPP5D/SHIP1. When phosphorylated at Tyr-1357, interacts with INPPL1/SHIP2. Interacts with RANBP9 and RANBP10, as well as SPSB1, SPSB2, SPSB3 and SPSB4. SPSB1 binding occurs in the presence and in the absence of HGF, however HGF treatment has a positive effect on this interaction. Interacts with MUC20; prevents interaction with GRB2 and suppresses hepatocyte growth factor-induced cell proliferation. Interacts with GRB10. Interacts with PTPN1 and PTPN2. Interacts with HSP90AA1 and HSP90AB1; the interaction suppresses MET kinase activity. Interacts with tensin TNS3. Interacts (when phosphorylated) with tensin TNS4 (via SH2 domain); the interaction increases MET protein stability by inhibiting MET endocytosis and subsequent lysosomal degradation. Autophosphorylated in response to ligand binding on Tyr-1235 and Tyr-1236 in the kinase domain leading to further phosphorylation of Tyr-1350 and Tyr-1357 in the C-terminal multifunctional docking site. Dephosphorylated by PTPRJ at Tyr-1350 and Tyr-1366. Dephosphorylated by PTPN1 and PTPN2. In terms of processing, ubiquitinated. Ubiquitination by CBL regulates the receptor stability and activity through proteasomal degradation. Post-translationally, O-mannosylation of IPT/TIG domains by TMEM260 is required for protein maturation. O-mannosylated residues are composed of single mannose glycans that are not elongated or modified.

It localises to the membrane. It catalyses the reaction L-tyrosyl-[protein] + ATP = O-phospho-L-tyrosyl-[protein] + ADP + H(+). In its inactive state, the C-terminal tail interacts with the catalytic domain and inhibits the kinase activity. Upon ligand binding, the C-terminal tail is displaced and becomes phosphorylated, thus increasing the kinase activity. Functionally, receptor tyrosine kinase that transduces signals from the extracellular matrix into the cytoplasm by binding to hepatocyte growth factor/HGF ligand. Regulates many physiological processes including proliferation, scattering, morphogenesis and survival. Ligand binding at the cell surface induces autophosphorylation of MET on its intracellular domain that provides docking sites for downstream signaling molecules. Following activation by ligand, interacts with the PI3-kinase subunit PIK3R1, PLCG1, SRC, GRB2, STAT3 or the adapter GAB1. Recruitment of these downstream effectors by MET leads to the activation of several signaling cascades including the RAS-ERK, PI3 kinase-AKT, or PLCgamma-PKC. The RAS-ERK activation is associated with the morphogenetic effects while PI3K/AKT coordinates prosurvival effects. During embryonic development, MET signaling plays a role in gastrulation, development and migration of muscles and neuronal precursors, angiogenesis and kidney formation. In adults, participates in wound healing as well as organ regeneration and tissue remodeling. Also promotes differentiation and proliferation of hematopoietic cells. This is Hepatocyte growth factor receptor (MET) from Muntiacus muntjak (Barking deer).